Consider the following 287-residue polypeptide: ATP synthase gamma chain (287 aa).

Belongs to the ATPase gamma chain family. In terms of assembly, F-type ATPases have 2 components, CF(1) - the catalytic core - and CF(0) - the membrane proton channel. CF(1) has five subunits: alpha(3), beta(3), gamma(1), delta(1), epsilon(1). CF(0) has three main subunits: a, b and c.

Its subcellular location is the cell inner membrane. Its function is as follows. Produces ATP from ADP in the presence of a proton gradient across the membrane. The gamma chain is believed to be important in regulating ATPase activity and the flow of protons through the CF(0) complex. This chain is ATP synthase gamma chain, found in Yersinia enterocolitica serotype O:8 / biotype 1B (strain NCTC 13174 / 8081).